Consider the following 1320-residue polypeptide: Probable inactive ATP-dependent zinc metalloprotease FTSHI 5, chloroplastic (1320 aa).

Residues 1–43 (MDFISASSLSSPFSTQLSPIYLSSGIVSLKPRHRVKNRNFGSR) constitute a chloroplast transit peptide. The next 3 helical transmembrane spans lie at 571 to 591 (LYLK…WIPM), 633 to 653 (NIND…IIPY), and 695 to 715 (FQWF…LYHV). 824 to 831 (GERGTGKT) is an ATP binding site.

It in the N-terminal section; belongs to the AAA ATPase family. In the C-terminal section; belongs to the peptidase M41 family. Oligomer.

It localises to the plastid. Its subcellular location is the chloroplast membrane. In terms of biological role, required for plastid development during embryogenesis. Might be involved in chaperone functions or play a structural role in the thylakoid FtsH complex. This Arabidopsis thaliana (Mouse-ear cress) protein is Probable inactive ATP-dependent zinc metalloprotease FTSHI 5, chloroplastic.